The primary structure comprises 741 residues: Ion-translocating oxidoreductase complex subunit C (741 aa).

4Fe-4S ferredoxin-type domains lie at 369 to 397 (GEPQ…QQLY) and 407 to 436 (KATT…VQYF). The [4Fe-4S] cluster site is built by C377, C380, C383, C387, C416, C419, C422, and C426. Residues 627–654 (IARAKARKLEQQQQANAEPEEQVDPRKA) form a disordered region.

This sequence belongs to the 4Fe4S bacterial-type ferredoxin family. RnfC subfamily. As to quaternary structure, the complex is composed of six subunits: RsxA, RsxB, RsxC, RsxD, RsxE and RsxG. [4Fe-4S] cluster serves as cofactor.

Its subcellular location is the cell inner membrane. Its function is as follows. Part of a membrane-bound complex that couples electron transfer with translocation of ions across the membrane. Required to maintain the reduced state of SoxR. The protein is Ion-translocating oxidoreductase complex subunit C of Escherichia coli O127:H6 (strain E2348/69 / EPEC).